Reading from the N-terminus, the 97-residue chain is Co-chaperonin GroES (97 aa).

This sequence belongs to the GroES chaperonin family. As to quaternary structure, heptamer of 7 subunits arranged in a ring. Interacts with the chaperonin GroEL.

It is found in the cytoplasm. Its function is as follows. Together with the chaperonin GroEL, plays an essential role in assisting protein folding. The GroEL-GroES system forms a nano-cage that allows encapsulation of the non-native substrate proteins and provides a physical environment optimized to promote and accelerate protein folding. GroES binds to the apical surface of the GroEL ring, thereby capping the opening of the GroEL channel. This Yersinia enterocolitica serotype O:8 / biotype 1B (strain NCTC 13174 / 8081) protein is Co-chaperonin GroES.